The sequence spans 67 residues: UPF0519 protein C (67 aa).

The segment at 18 to 37 is disordered; the sequence is KSQANLNSNSTNSPNNVQGL. Residues 22–33 are compositionally biased toward low complexity; it reads NLNSNSTNSPNN.

The protein belongs to the UPF0519 family.

The chain is UPF0519 protein C from Dictyostelium discoideum (Social amoeba).